The primary structure comprises 133 residues: ATP synthase epsilon chain (133 aa).

The protein belongs to the ATPase epsilon chain family. F-type ATPases have 2 components, CF(1) - the catalytic core - and CF(0) - the membrane proton channel. CF(1) has five subunits: alpha(3), beta(3), gamma(1), delta(1), epsilon(1). CF(0) has three main subunits: a, b and c.

It localises to the cell membrane. Produces ATP from ADP in the presence of a proton gradient across the membrane. The chain is ATP synthase epsilon chain (atpC) from Mycoplasma genitalium (strain ATCC 33530 / DSM 19775 / NCTC 10195 / G37) (Mycoplasmoides genitalium).